The chain runs to 95 residues: Neurexophilin-3 (95 aa).

N-linked (GlcNAc...) asparagine glycosylation is found at Asn-1 and Asn-7. Residues Asn-1–Xaa-21 are III. An IV (linker domain) region spans residues His-22 to Glu-30. The segment at Ala-31–Arg-95 is v (Cys-rich).

Belongs to the neurexophilin family.

The protein localises to the secreted. In terms of biological role, may be signaling molecules that resemble neuropeptides. Ligand for alpha-neurexins. The protein is Neurexophilin-3 (NXPH3) of Macaca mulatta (Rhesus macaque).